Consider the following 103-residue polypeptide: Large ribosomal subunit protein bL21 (103 aa).

The protein belongs to the bacterial ribosomal protein bL21 family. As to quaternary structure, part of the 50S ribosomal subunit. Contacts protein L20.

Its function is as follows. This protein binds to 23S rRNA in the presence of protein L20. The polypeptide is Large ribosomal subunit protein bL21 (Aliivibrio salmonicida (strain LFI1238) (Vibrio salmonicida (strain LFI1238))).